The following is a 405-amino-acid chain: S-arrestin (405 aa).

Thr234 carries the phosphothreonine modification.

Belongs to the arrestin family. In terms of assembly, monomer. Homodimer. Homotetramer. Interacts with RHO (via the phosphorylated C-terminus). Detected in retina, in the proximal portion of the outer segment of rod photoreceptor cells (at protein level).

It is found in the cell projection. It localises to the cilium. The protein localises to the photoreceptor outer segment. The protein resides in the membrane. Binds to photoactivated, phosphorylated RHO and terminates RHO signaling via G-proteins by competing with G-proteins for the same binding site on RHO. May play a role in preventing light-dependent degeneration of retinal photoreceptor cells. This is S-arrestin (SAG) from Homo sapiens (Human).